A 389-amino-acid chain; its full sequence is Shewanella-like protein phosphatase 1 (389 aa).

The transit peptide at 1–53 directs the protein to the chloroplast; that stretch reads MASLYLNSLLPLPPSHPQKLLEPSSSSLLSTSNGNELALKPIVINGDPPTFVS. The Mn(2+) site is built by Asp64, His66, Asp102, and Asn137. The Proton donor role is filled by His138. Mn(2+)-binding residues include His242 and His314.

Belongs to the metallophosphoesterase superfamily. SLP family. Mn(2+) serves as cofactor. Expressed in rosettes leaves, shoots and flowers (at protein level).

The protein localises to the plastid. It localises to the chloroplast. Its function is as follows. Shows phosphatase activity, hydrolyzing the artificial substrate para-nitrophenylphosphate (pNPP) in vitro. The polypeptide is Shewanella-like protein phosphatase 1 (Arabidopsis thaliana (Mouse-ear cress)).